The sequence spans 614 residues: 2-succinyl-5-enolpyruvyl-6-hydroxy-3-cyclohexene-1-carboxylate synthase (614 aa).

Belongs to the TPP enzyme family. MenD subfamily. In terms of assembly, homodimer. Mg(2+) serves as cofactor. The cofactor is Mn(2+). It depends on thiamine diphosphate as a cofactor.

It carries out the reaction isochorismate + 2-oxoglutarate + H(+) = 5-enolpyruvoyl-6-hydroxy-2-succinyl-cyclohex-3-ene-1-carboxylate + CO2. The protein operates within quinol/quinone metabolism; 1,4-dihydroxy-2-naphthoate biosynthesis; 1,4-dihydroxy-2-naphthoate from chorismate: step 2/7. It participates in quinol/quinone metabolism; menaquinone biosynthesis. Its function is as follows. Catalyzes the thiamine diphosphate-dependent decarboxylation of 2-oxoglutarate and the subsequent addition of the resulting succinic semialdehyde-thiamine pyrophosphate anion to isochorismate to yield 2-succinyl-5-enolpyruvyl-6-hydroxy-3-cyclohexene-1-carboxylate (SEPHCHC). The protein is 2-succinyl-5-enolpyruvyl-6-hydroxy-3-cyclohexene-1-carboxylate synthase of Sorangium cellulosum (strain So ce56) (Polyangium cellulosum (strain So ce56)).